Reading from the N-terminus, the 565-residue chain is NAD-dependent malic enzyme (565 aa).

The Proton donor role is filled by Tyr-104. Residue Arg-157 participates in NAD(+) binding. Lys-175 functions as the Proton acceptor in the catalytic mechanism. Positions 246, 247, and 270 each coordinate a divalent metal cation. Asp-270 and Asn-418 together coordinate NAD(+).

It belongs to the malic enzymes family. Homotetramer. Mg(2+) is required as a cofactor. Mn(2+) serves as cofactor.

The enzyme catalyses (S)-malate + NAD(+) = pyruvate + CO2 + NADH. The catalysed reaction is oxaloacetate + H(+) = pyruvate + CO2. This chain is NAD-dependent malic enzyme, found in Escherichia coli O9:H4 (strain HS).